The chain runs to 860 residues: Nuclear pore complex protein NUP93B (860 aa).

This sequence belongs to the nucleoporin interacting component (NIC) family. Part of the nuclear pore complex (NPC). The NPC has an eight-fold symmetrical structure comprising a central transport channel and two rings, the cytoplasmic and nuclear rings, to which eight filaments are attached. The cytoplasmic filaments have loose ends, while the nuclear filaments are joined in a distal ring, forming a nuclear basket. NPCs are highly dynamic in configuration and composition, and can be devided in 3 subcomplexes, the NUP62 subcomplex, the NUP107-160 subcomplex and the NUP93 subcomplex, containing approximately 30 different nucleoporin proteins.

Its subcellular location is the nucleus envelope. The protein resides in the nucleus. It localises to the nuclear pore complex. The chain is Nuclear pore complex protein NUP93B from Arabidopsis thaliana (Mouse-ear cress).